A 540-amino-acid polypeptide reads, in one-letter code: Chaperonin GroEL (540 aa).

Residues 30-33 (TLGP), 87-91 (DGTTT), Gly414, 479-481 (NAL), and Asp495 contribute to the ATP site.

Belongs to the chaperonin (HSP60) family. In terms of assembly, forms a cylinder of 14 subunits composed of two heptameric rings stacked back-to-back. Interacts with the co-chaperonin GroES.

Its subcellular location is the cytoplasm. The catalysed reaction is ATP + H2O + a folded polypeptide = ADP + phosphate + an unfolded polypeptide.. Together with its co-chaperonin GroES, plays an essential role in assisting protein folding. The GroEL-GroES system forms a nano-cage that allows encapsulation of the non-native substrate proteins and provides a physical environment optimized to promote and accelerate protein folding. The polypeptide is Chaperonin GroEL (Rubrobacter xylanophilus (strain DSM 9941 / JCM 11954 / NBRC 16129 / PRD-1)).